The sequence spans 324 residues: DNA-directed RNA polymerase subunit alpha (324 aa).

Residues 1–230 (MQSSGLLKPR…EQLSVFADLE (230 aa)) form an alpha N-terminal domain (alpha-NTD) region. The segment at 244–324 (VDPVLLRPVD…NWPPAGLEKA (81 aa)) is alpha C-terminal domain (alpha-CTD).

The protein belongs to the RNA polymerase alpha chain family. In terms of assembly, homodimer. The RNAP catalytic core consists of 2 alpha, 1 beta, 1 beta' and 1 omega subunit. When a sigma factor is associated with the core the holoenzyme is formed, which can initiate transcription.

It catalyses the reaction RNA(n) + a ribonucleoside 5'-triphosphate = RNA(n+1) + diphosphate. DNA-dependent RNA polymerase catalyzes the transcription of DNA into RNA using the four ribonucleoside triphosphates as substrates. The polypeptide is DNA-directed RNA polymerase subunit alpha (Dechloromonas aromatica (strain RCB)).